A 443-amino-acid chain; its full sequence is Nuclear pore complex-interacting protein family member B15 (443 aa).

An N-terminal signal peptide occupies residues 1–18; it reads MRLRFWLLIWLLLGFISH. Residue Asn111 is glycosylated (N-linked (GlcNAc...) asparagine). 2 disordered regions span residues 242–262 and 330–413; these read RMGRQPPPPTQQHSITDNSLS and SPLP…TRHC. Residues 252-262 are compositionally biased toward polar residues; it reads QQHSITDNSLS. The span at 351–393 shows a compositional bias: basic and acidic residues; sequence EAEKPPKPKRWRVDEVEQSPKPKRRRADEVEQSPKPKRQREAE. The segment covering 399–412 has biased composition (basic residues); the sequence is KPKRRRLSKLRTRH.

Belongs to the NPIP family.

It localises to the secreted. This Homo sapiens (Human) protein is Nuclear pore complex-interacting protein family member B15 (NPIPB15).